We begin with the raw amino-acid sequence, 385 residues long: Transcription termination factor 2, mitochondrial (385 aa).

The N-terminal 35 residues, 1 to 35 (MLWKLLLRSQSCRLCSFRKMRSPPKYRPFLACFTY), are a transit peptide targeting the mitochondrion.

It belongs to the mTERF family. Monomer. In terms of tissue distribution, expressed in skeletal muscle, heart, liver and pancreas.

It localises to the mitochondrion. The protein localises to the mitochondrion matrix. It is found in the mitochondrion nucleoid. Its function is as follows. Binds mitochondrial DNA and plays a role in the regulation of transcription of mitochondrial mRNA and rRNA species. The sequence is that of Transcription termination factor 2, mitochondrial (MTERF2) from Homo sapiens (Human).